A 476-amino-acid polypeptide reads, in one-letter code: DnaJ homolog subfamily C member 7 homolog (476 aa).

Residues 1–22 form a disordered region; it reads MTEVETTHMNAGTESQQEPAEL. Over residues 7 to 18 the composition is skewed to polar residues; sequence THMNAGTESQQE. TPR repeat units lie at residues 23-56, 59-92, 143-176, 177-210, 223-256, 261-294, and 295-328; these read AEKQ…GSDS, AIYY…KPDV, MSWM…NPKN, VEAL…DPDC, LENT…DPDN, AKLY…DSSY, and LKGL…DASD. In terms of domain architecture, J spans 349 to 414; it reads DHYKILGVSK…ESRRRFDSGV (66 aa).

It is found in the cytoplasm. The protein is DnaJ homolog subfamily C member 7 homolog of Schizosaccharomyces pombe (strain 972 / ATCC 24843) (Fission yeast).